Here is a 254-residue protein sequence, read N- to C-terminus: Pectate lyase E (254 aa).

The N-terminal stretch at 1–17 (MYQPLLLLPLLLTSAFA) is a signal peptide. The disordered stretch occupies residues 227 to 254 (TNNNSKEPKKKSSGPSSYCKYSEPLSKC). Asn-229 carries an N-linked (GlcNAc...) asparagine glycan. A compositionally biased stretch (low complexity) spans 239–254 (SGPSSYCKYSEPLSKC).

It belongs to the polysaccharide lyase 3 family. Ca(2+) serves as cofactor.

It is found in the secreted. It carries out the reaction Eliminative cleavage of (1-&gt;4)-alpha-D-galacturonan to give oligosaccharides with 4-deoxy-alpha-D-galact-4-enuronosyl groups at their non-reducing ends.. Functionally, pectinolytic enzyme consist of four classes of enzymes: pectin lyase, polygalacturonase, pectin methylesterase and rhamnogalacturonase. Among pectinolytic enzymes, pectin lyase is the most important in depolymerization of pectin, since it cleaves internal glycosidic bonds of highly methylated pectins. Favors pectate, the anion, over pectin, the methyl ester. This is Pectate lyase E (plyE) from Emericella nidulans (strain FGSC A4 / ATCC 38163 / CBS 112.46 / NRRL 194 / M139) (Aspergillus nidulans).